The primary structure comprises 38 residues: Potassium channel toxin alpha-KTx 2.13 (38 aa).

3 disulfides stabilise this stretch: Cys7–Cys29, Cys13–Cys34, and Cys17–Cys36.

Belongs to the short scorpion toxin superfamily. Potassium channel inhibitor family. Alpha-KTx 02 subfamily. In terms of tissue distribution, expressed by the venom gland.

Its subcellular location is the secreted. Its function is as follows. Selective inhibitor of voltage-gated potassium channels, blocks the Kv1.2/KCNA2 (Kd=1.3 nM) and Kv1.3/KCNA3 (Kd=7.2 nM) channels. Association and dissociation rates of the toxin are slower for Kv1.2/KCNA2 than for Kv1.3/KCNA3. This is Potassium channel toxin alpha-KTx 2.13 from Centruroides suffusus (Durango bark scorpion).